The chain runs to 439 residues: Ornithine aminotransferase, mitochondrial (439 aa).

The transit peptide at 1-35 (MLSKLASLQTVAALRRGLRTSVASATSVATKKTEQ) directs the protein to the mitochondrion. Residues K49 and K66 each carry the N6-acetyllysine modification. K102 carries the post-translational modification N6-succinyllysine. An N6-acetyllysine; alternate modification is found at K107. K107 bears the N6-succinyllysine; alternate mark. An N6-(pyridoxal phosphate)lysine modification is found at K292. Position 362 is an N6-acetyllysine; alternate (K362). At K362 the chain carries N6-succinyllysine; alternate. N6-acetyllysine is present on residues K386 and K392. K405 carries the N6-acetyllysine; alternate modification. An N6-succinyllysine; alternate modification is found at K405. At K421 the chain carries N6-acetyllysine.

As to quaternary structure, homohexamer. Pyridoxal 5'-phosphate is required as a cofactor. As to expression, expressed in the head and flagellum of epididymal sperm but not in testicular sperm (at protein level).

It is found in the mitochondrion matrix. The enzyme catalyses L-ornithine + 2-oxoglutarate = L-glutamate 5-semialdehyde + L-glutamate. Its pathway is amino-acid biosynthesis; L-proline biosynthesis; L-glutamate 5-semialdehyde from L-ornithine: step 1/1. Its function is as follows. Catalyzes the reversible interconversion of L-ornithine and 2-oxoglutarate to L-glutamate semialdehyde and L-glutamate. This Rattus norvegicus (Rat) protein is Ornithine aminotransferase, mitochondrial (Oat).